A 202-amino-acid chain; its full sequence is Transcription antitermination protein NusB (202 aa).

Basic and acidic residues predominate over residues methionine 1 to alanine 11. Disordered stretches follow at residues methionine 1–glycine 21 and serine 169–alanine 202.

This sequence belongs to the NusB family.

Its function is as follows. Involved in transcription antitermination. Required for transcription of ribosomal RNA (rRNA) genes. Binds specifically to the boxA antiterminator sequence of the ribosomal RNA (rrn) operons. In Corynebacterium jeikeium (strain K411), this protein is Transcription antitermination protein NusB.